Here is a 252-residue protein sequence, read N- to C-terminus: 2-succinyl-6-hydroxy-2,4-cyclohexadiene-1-carboxylate synthase (252 aa).

This sequence belongs to the AB hydrolase superfamily. MenH family. As to quaternary structure, monomer.

The catalysed reaction is 5-enolpyruvoyl-6-hydroxy-2-succinyl-cyclohex-3-ene-1-carboxylate = (1R,6R)-6-hydroxy-2-succinyl-cyclohexa-2,4-diene-1-carboxylate + pyruvate. It participates in quinol/quinone metabolism; 1,4-dihydroxy-2-naphthoate biosynthesis; 1,4-dihydroxy-2-naphthoate from chorismate: step 3/7. The protein operates within quinol/quinone metabolism; menaquinone biosynthesis. Functionally, catalyzes a proton abstraction reaction that results in 2,5-elimination of pyruvate from 2-succinyl-5-enolpyruvyl-6-hydroxy-3-cyclohexene-1-carboxylate (SEPHCHC) and the formation of 2-succinyl-6-hydroxy-2,4-cyclohexadiene-1-carboxylate (SHCHC). The chain is 2-succinyl-6-hydroxy-2,4-cyclohexadiene-1-carboxylate synthase from Salmonella schwarzengrund (strain CVM19633).